A 481-amino-acid polypeptide reads, in one-letter code: Acetyltransferase peniE (481 aa).

Residues His-164 and Asp-411 each act as proton acceptor in the active site.

The protein belongs to the plant acyltransferase family. Monomer.

Acetyltransferase; part of the gene cluster that mediates the biosynthesis of penifulvin A, a potent insecticidal sesquiterpene that features a [5.5.5.6]dioxafenestrane ring. The first step of the pathway is performed by the sesquiterpene cyclase peniA that generates the angular triquinane scaffold silphinene via cyclization of the linear farnesyl pyrophosphate (FPP). The cytochrome P450 monooxygenase peniB and the flavin-dependent monooxygenase peniC then catalyze a series of oxidation reactions to transform silphinene into penifulvin A. The dioxygenases peniD and peniF, as well as the acetyltransferase peniE, do not seem to be involved in the biosynthesis of penifulvin A. The chain is Acetyltransferase peniE from Penicillium patulum (Penicillium griseofulvum).